The chain runs to 207 residues: Protein-L-isoaspartate O-methyltransferase (207 aa).

Serine 56 is a catalytic residue.

It belongs to the methyltransferase superfamily. L-isoaspartyl/D-aspartyl protein methyltransferase family.

It localises to the cytoplasm. The enzyme catalyses [protein]-L-isoaspartate + S-adenosyl-L-methionine = [protein]-L-isoaspartate alpha-methyl ester + S-adenosyl-L-homocysteine. Catalyzes the methyl esterification of L-isoaspartyl residues in peptides and proteins that result from spontaneous decomposition of normal L-aspartyl and L-asparaginyl residues. It plays a role in the repair and/or degradation of damaged proteins. The polypeptide is Protein-L-isoaspartate O-methyltransferase (Pyrobaculum islandicum (strain DSM 4184 / JCM 9189 / GEO3)).